Here is a 240-residue protein sequence, read N- to C-terminus: Methylthioribulose-1-phosphate dehydratase (240 aa).

Positions 1-17 (MAQEVENNNNDHLVQSS) are enriched in polar residues. The disordered stretch occupies residues 1–20 (MAQEVENNNNDHLVQSSDPE). C100 provides a ligand contact to substrate. Zn(2+) contacts are provided by H117 and H119. E146 serves as the catalytic Proton donor/acceptor. H202 is a binding site for Zn(2+).

It belongs to the aldolase class II family. MtnB subfamily. Zn(2+) is required as a cofactor.

The protein localises to the cytoplasm. The catalysed reaction is 5-(methylsulfanyl)-D-ribulose 1-phosphate = 5-methylsulfanyl-2,3-dioxopentyl phosphate + H2O. It participates in amino-acid biosynthesis; L-methionine biosynthesis via salvage pathway; L-methionine from S-methyl-5-thio-alpha-D-ribose 1-phosphate: step 2/6. Its function is as follows. Catalyzes the dehydration of methylthioribulose-1-phosphate (MTRu-1-P) into 2,3-diketo-5-methylthiopentyl-1-phosphate (DK-MTP-1-P). The chain is Methylthioribulose-1-phosphate dehydratase from Neosartorya fischeri (strain ATCC 1020 / DSM 3700 / CBS 544.65 / FGSC A1164 / JCM 1740 / NRRL 181 / WB 181) (Aspergillus fischerianus).